The primary structure comprises 186 residues: Protein GrpE (186 aa).

Basic and acidic residues-rich tracts occupy residues 1-13 (MSDN…EEQH) and 23-34 (EETHQAEDAVEH). A disordered region spans residues 1–34 (MSDNKTELNEEQHNATAEGEVSEETHQAEDAVEH).

It belongs to the GrpE family. As to quaternary structure, homodimer.

The protein resides in the cytoplasm. Participates actively in the response to hyperosmotic and heat shock by preventing the aggregation of stress-denatured proteins, in association with DnaK and GrpE. It is the nucleotide exchange factor for DnaK and may function as a thermosensor. Unfolded proteins bind initially to DnaJ; upon interaction with the DnaJ-bound protein, DnaK hydrolyzes its bound ATP, resulting in the formation of a stable complex. GrpE releases ADP from DnaK; ATP binding to DnaK triggers the release of the substrate protein, thus completing the reaction cycle. Several rounds of ATP-dependent interactions between DnaJ, DnaK and GrpE are required for fully efficient folding. The protein is Protein GrpE of Hydrogenovibrio crunogenus (strain DSM 25203 / XCL-2) (Thiomicrospira crunogena).